The chain runs to 177 residues: MKTRIHVVQGDITKLAVDVIVNAANPSLMGGGGVDGAIHRAAGPALLDACLKVRQQQGDCPTGHAVITLAGDLPAKAVVHTVGPVWRGGEQNEDQLLQDAYLNSLRLVAANSYTSVAFPAISTGVYSYPRAAAAEIAVKTVSEFITRHALPEQVYFVCYDEENAHLYERLLTQQGDE.

Positions 1-175 (MKTRIHVVQG…LYERLLTQQG (175 aa)) constitute a Macro domain. Substrate is bound by residues 11-12 (DI), Asn25, 33-35 (GVD), and 122-126 (STGVY). Asp35 (proton acceptor) is an active-site residue.

The protein belongs to the MacroD-type family. YmdB subfamily. In terms of assembly, homodimer. Interacts with RNase III.

It carries out the reaction 3''-O-acetyl-ADP-D-ribose + H2O = ADP-D-ribose + acetate + H(+). It catalyses the reaction 2''-O-acetyl-ADP-D-ribose + H2O = ADP-D-ribose + acetate + H(+). In terms of biological role, deacetylates O-acetyl-ADP ribose to yield ADP-ribose and free acetate. Down-regulates ribonuclease 3 (RNase III) activity. Acts by interacting directly with the region of the ribonuclease that is required for dimerization/activation. The sequence is that of O-acetyl-ADP-ribose deacetylase from Shigella flexneri serotype 5b (strain 8401).